The sequence spans 124 residues: Small ribosomal subunit protein uS12 (124 aa).

The residue at position 89 (aspartate 89) is a 3-methylthioaspartic acid.

Belongs to the universal ribosomal protein uS12 family. Part of the 30S ribosomal subunit. Contacts proteins S8 and S17. May interact with IF1 in the 30S initiation complex.

In terms of biological role, with S4 and S5 plays an important role in translational accuracy. Interacts with and stabilizes bases of the 16S rRNA that are involved in tRNA selection in the A site and with the mRNA backbone. Located at the interface of the 30S and 50S subunits, it traverses the body of the 30S subunit contacting proteins on the other side and probably holding the rRNA structure together. The combined cluster of proteins S8, S12 and S17 appears to hold together the shoulder and platform of the 30S subunit. The polypeptide is Small ribosomal subunit protein uS12 (Koribacter versatilis (strain Ellin345)).